The sequence spans 689 residues: Armadillo-like helical domain-containing protein 3 (689 aa).

Residues 520–538 form a helical membrane-spanning segment; that stretch reads IFTLTLMVVNLFNMFITYG.

Belongs to the ARMH3 family.

The protein resides in the golgi apparatus membrane. Its subcellular location is the cytoplasm. May be involved in Golgi maintenance and protein secretion. The sequence is that of Armadillo-like helical domain-containing protein 3 from Xenopus laevis (African clawed frog).